The sequence spans 465 residues: Midnolin (465 aa).

Residues 32–106 (MSLAIHSTTG…LTLVPTVEAG (75 aa)) enclose the Ubiquitin-like domain. Disordered regions lie at residues 185-262 (SVAT…SRKP) and 400-445 (RLRR…GLDF). Low complexity-rich tracts occupy residues 195–219 (RPVS…PSPV) and 240–257 (SPPA…SPTP). The interval 397–424 (QQKRLRRKARRDARGPYHWTPSRKAGRS) is required for nucleolar localization.

In terms of assembly, interacts with GCK; the interaction occurs preferentially at low glucose levels. Interacts with the proteasome. Expressed at high levels in brain and liver with significantly lower levels in muscle.

It localises to the nucleus. It is found in the cytoplasm. The protein localises to the cytosol. The protein resides in the nucleolus. In terms of biological role, facilitates the ubiquitin-independent proteasomal degradation of stimulus-induced transcription factors such as FOSB, EGR1, NR4A1, and IRF4 to the proteasome for degradation. Promotes also the degradation of other substrates such as CBX4. Plays a role in inhibiting the activity of glucokinase GCK and both glucose-induced and basal insulin secretion. In Mus musculus (Mouse), this protein is Midnolin (Midn).